The following is a 56-amino-acid chain: Ovomucoid (56 aa).

One can recognise a Kazal-like domain in the interval 6–56 (VDCSEYPKPACTLEYRPLCGSDNKTYGNKCNFCNAVVESNGTLTLSHFGKC). Cystine bridges form between Cys8–Cys38, Cys16–Cys35, and Cys24–Cys56. Asn45 carries N-linked (GlcNAc...) asparagine glycosylation.

The protein resides in the secreted. This Meleagris ocellata (Ocellated turkey) protein is Ovomucoid.